The following is a 512-amino-acid chain: MESVIFSINGEIIQVNKEIITASPYNFFKRIQDHHLKDEAIILNGINYHAFESLLDYIRWKKINITINNVEMILVAAIIIDVPPVVDLCVKTMIHNINSTNCIRMFNFSKRYGIKKLYNASMSEIINNITAVTSDPEFGKLSKDELTTILSHENVNVNHEDVTAMILLKWIHKNPNDVDIINILHPKFMTNTMRNAISLLGLTISKSTKPVTRNGIKHNIVVIKNSDYISTITHYSPRTEYWTIVGNTDRQFYNANVLHNCLYIIGGMINNRHVYSVSRVDLETKKWKTVTNMSSLKSEVSTCVNDGKLYVIGGLEFSISTGVAEYLKHGTSKWIRLPNLITPRYSGASVFVNDDIYVMGGVYTTYEKYVVLNDVECFTKNRWIKKSPMPRHHSIVYAVEYDGDIYVITGITHETRNYLYKYIVKEDKWIELYMYFNHVGKMFVCSCGDYILIIADAKYEYYPKSNTWNLFDMSTRNIEYYDMFTKDETPKCNVTHKSLPSFLSNCEKQFLQ.

Positions glutamate 2–isoleucine 67 constitute a BTB domain. Positions cysteine 102–asparagine 176 constitute a BACK domain. Kelch repeat units lie at residues isoleucine 216–cysteine 261, leucine 262–glycine 307, leucine 309–aspartate 354, isoleucine 356–glycine 403, isoleucine 405–aspartate 449, and leucine 452–serine 498.

This sequence belongs to the poxviruses Kelch family.

This chain is Kelch repeat protein C2, found in Vaccinia virus (strain Western Reserve) (VACV).